A 631-amino-acid polypeptide reads, in one-letter code: MRYSSYEMKKNRFTYGLALGALGVVFGDIGTSPLYALKVTLSGIPINQFNILGVLSLIFWSLIIVVSFKYLMIIFRADNDGEGGILALLALMKHKSTKYQPLFYIVAIFGAGLLLGDGMLTPAISVVSAVEGLGTLSDKLYPYVLPIASVILVLLFSLQAKGTARIGYLFGPLILIWFITIAILGILQIVEHPVVLQAINPYYAIAFLVDEGLRGYFLLGGIFLVVTGGEALFADIGHFGKNPIRFSWFFIALPCLLLNYFGQGANLIVRPEEISNPFFMIAPPWFYLPLIIIATVATVIASQAVISATFSLTKQAVLLGLCPKIPIVQTSMLHSGQIYVPQINFILFIGTMAFCLAFKTSDNLAHAYGIAVNLEMLLVDAMVAYAAVSIWRWSTFNVIFLFGLFLLIDLAFLGANTHKFITGGWVPIVLAFVIAFIMYSWRYGLEYLRDNFYMNKEDISKILKQLQYKSLNQLPGVSAIFITDVYDKSGGSFLHFLKLNRSVPENVLIVNYIVDNIPYVHYSQRYEIVCLDEKVCKLVIHYGFMETINIPRSLEKACNKNILPFKFNVDTATFMVEIPNIMASKEKRSLSFYWQEKLFAFLMRNYSANLNIEFYKLPYNRTIAIGTYCIL.

A run of 12 helical transmembrane segments spans residues 17-37 (LALGALGVVFGDIGTSPLYAL), 55-75 (LSLIFWSLIIVVSFKYLMIIF), 101-121 (PLFYIVAIFGAGLLLGDGMLT), 140-160 (LYPYVLPIASVILVLLFSLQA), 166-186 (IGYLFGPLILIWFITIAILGI), 217-237 (FLLGGIFLVVTGGEALFADIG), 249-269 (FFIALPCLLLNYFGQGANLIV), 277-297 (PFFMIAPPWFYLPLIIIATVA), 338-358 (IYVPQINFILFIGTMAFCLAF), 370-390 (IAVNLEMLLVDAMVAYAAVSI), 395-415 (TFNVIFLFGLFLLIDLAFLGA), and 420-440 (FITGGWVPIVLAFVIAFIMYS).

This sequence belongs to the HAK/KUP transporter (TC 2.A.72) family.

It localises to the cell inner membrane. The catalysed reaction is K(+)(in) + H(+)(in) = K(+)(out) + H(+)(out). Transport of potassium into the cell. Likely operates as a K(+):H(+) symporter. This chain is Probable potassium transport system protein Kup 1, found in Legionella pneumophila (strain Corby).